Here is a 256-residue protein sequence, read N- to C-terminus: 2-C-methyl-D-erythritol 4-phosphate cytidylyltransferase (256 aa).

Belongs to the IspD/TarI cytidylyltransferase family. IspD subfamily.

It carries out the reaction 2-C-methyl-D-erythritol 4-phosphate + CTP + H(+) = 4-CDP-2-C-methyl-D-erythritol + diphosphate. The protein operates within isoprenoid biosynthesis; isopentenyl diphosphate biosynthesis via DXP pathway; isopentenyl diphosphate from 1-deoxy-D-xylulose 5-phosphate: step 2/6. Functionally, catalyzes the formation of 4-diphosphocytidyl-2-C-methyl-D-erythritol from CTP and 2-C-methyl-D-erythritol 4-phosphate (MEP). The sequence is that of 2-C-methyl-D-erythritol 4-phosphate cytidylyltransferase from Corynebacterium glutamicum (strain R).